Here is a 161-residue protein sequence, read N- to C-terminus: Kininogen-2 (161 aa).

The signal sequence occupies residues 1–23; sequence MRLWFCLSFFVVLCLEHFPGTLA. A disulfide bridge links Cys-150 with Cys-156. At Val-160 the chain carries Valine amide.

It belongs to the bradykinin-related peptide family. Expressed by the skin glands.

It is found in the secreted. In terms of biological role, inhibits ACE with a Ki of 1.6 uM, and targets B2 bradykinin receptor (BDKRB2). Provokes contraction of smooth muscle preparation (ileum). In vivo, induces an early hyperalgesic effects in living rats after intraplantar injection. Inhibits the bradykinin-induced in vitro relaxation of rat arterial smooth muscle and constriction of intestinal smooth muscle. May target bradykinin receptors (BDKRB). This Bombina orientalis (Oriental fire-bellied toad) protein is Kininogen-2.